Here is a 538-residue protein sequence, read N- to C-terminus: Nicotinate phosphoribosyltransferase (538 aa).

Nicotinate contacts are provided by Tyr-21 and Thr-210. Position 213 is a phosphohistidine (His-213). Arg-318 lines the nicotinate pocket. Thr-380 contributes to the 5-phospho-alpha-D-ribose 1-diphosphate binding site.

The protein belongs to the NAPRTase family. Homodimer. It depends on Mg(2+) as a cofactor. Mn(2+) serves as cofactor. Transiently phosphorylated on a His residue during the reaction cycle. Phosphorylation strongly increases the affinity for substrates and increases the rate of nicotinate D-ribonucleotide production. Dephosphorylation regenerates the low-affinity form of the enzyme, leading to product release.

It is found in the cytoplasm. Its subcellular location is the cytosol. The catalysed reaction is nicotinate + 5-phospho-alpha-D-ribose 1-diphosphate + ATP + H2O = nicotinate beta-D-ribonucleotide + ADP + phosphate + diphosphate. It participates in cofactor biosynthesis; NAD(+) biosynthesis; nicotinate D-ribonucleotide from nicotinate: step 1/1. In terms of biological role, catalyzes the first step in the biosynthesis of NAD from nicotinic acid, the ATP-dependent synthesis of beta-nicotinate D-ribonucleotide from nicotinate and 5-phospho-D-ribose 1-phosphate. Helps prevent cellular oxidative stress via its role in NAD biosynthesis. In Rattus norvegicus (Rat), this protein is Nicotinate phosphoribosyltransferase (Naprt).